Here is a 365-residue protein sequence, read N- to C-terminus: 3-isopropylmalate dehydrogenase (365 aa).

80-91 (GPKWGTGSVRPE) is an NAD(+) binding site. Substrate is bound by residues Arg98, Arg108, Arg137, and Asp226. Positions 226, 251, and 255 each coordinate Mg(2+). 290-301 (GSAPDLPKGKVN) contributes to the NAD(+) binding site.

This sequence belongs to the isocitrate and isopropylmalate dehydrogenases family. In terms of assembly, homodimer. Mg(2+) serves as cofactor. The cofactor is Mn(2+).

It localises to the cytoplasm. It carries out the reaction (2R,3S)-3-isopropylmalate + NAD(+) = 4-methyl-2-oxopentanoate + CO2 + NADH. The protein operates within amino-acid biosynthesis; L-leucine biosynthesis; L-leucine from 3-methyl-2-oxobutanoate: step 3/4. Catalyzes the oxidation of 3-carboxy-2-hydroxy-4-methylpentanoate (3-isopropylmalate) to 3-carboxy-4-methyl-2-oxopentanoate. The product decarboxylates to 4-methyl-2 oxopentanoate. This chain is 3-isopropylmalate dehydrogenase (LEU2), found in Maudiozyma exigua (Yeast).